The chain runs to 419 residues: UDP-N-acetylglucosamine 1-carboxyvinyltransferase (419 aa).

A phosphoenolpyruvate-binding site is contributed by 22 to 23; that stretch reads KN. Arginine 91 serves as a coordination point for UDP-N-acetyl-alpha-D-glucosamine. Cysteine 115 serves as the catalytic Proton donor. Cysteine 115 bears the 2-(S-cysteinyl)pyruvic acid O-phosphothioketal mark. Residues 120-124, 160-163, aspartate 305, and isoleucine 327 contribute to the UDP-N-acetyl-alpha-D-glucosamine site; these read RPVDL and KVSV.

The protein belongs to the EPSP synthase family. MurA subfamily.

The protein resides in the cytoplasm. The catalysed reaction is phosphoenolpyruvate + UDP-N-acetyl-alpha-D-glucosamine = UDP-N-acetyl-3-O-(1-carboxyvinyl)-alpha-D-glucosamine + phosphate. It participates in cell wall biogenesis; peptidoglycan biosynthesis. Cell wall formation. Adds enolpyruvyl to UDP-N-acetylglucosamine. The sequence is that of UDP-N-acetylglucosamine 1-carboxyvinyltransferase from Klebsiella pneumoniae subsp. pneumoniae (strain ATCC 700721 / MGH 78578).